The sequence spans 519 residues: Aspartokinase (519 aa).

The residue at position 326 (Ser-326) is a Phosphoserine. A Phosphothreonine modification is found at Thr-328. The ACT domain maps to 436-518 (LVGKHMRNTT…MLVEKPWLYS (83 aa)).

This sequence belongs to the aspartokinase family.

It carries out the reaction L-aspartate + ATP = 4-phospho-L-aspartate + ADP. It functions in the pathway amino-acid biosynthesis; L-methionine biosynthesis via de novo pathway; L-homoserine from L-aspartate: step 1/3. The protein operates within amino-acid biosynthesis; L-threonine biosynthesis; L-threonine from L-aspartate: step 1/5. Phosphorylates aspartate, the first step in the biosynthesis of amino acids that derive from aspartate (the aspartate family of amino acids), including methioinine and threonine, the latter of which is a precursor to isoleucine. This chain is Aspartokinase, found in Schizosaccharomyces pombe (strain 972 / ATCC 24843) (Fission yeast).